Here is a 207-residue protein sequence, read N- to C-terminus: Small ribosomal subunit protein uS10m (207 aa).

The N-terminal 24 residues, 1 to 24 (MLSVFGLRTVARCNSTLASGGARA), are a transit peptide targeting the mitochondrion.

It belongs to the universal ribosomal protein uS10 family. In terms of assembly, part of the mitochondrial small ribosomal subunit.

It is found in the mitochondrion. Its function is as follows. Involved in mitochondrial genome encoded proteins translation. Involved in the binding of tRNA to the ribosomes. The protein is Small ribosomal subunit protein uS10m (RSM10) of Eremothecium gossypii (strain ATCC 10895 / CBS 109.51 / FGSC 9923 / NRRL Y-1056) (Yeast).